The following is a 126-amino-acid chain: Fluoride-specific ion channel FluC (126 aa).

Transmembrane regions (helical) follow at residues Phe4–Val24, Tyr38–Phe58, Ile71–Val91, and Leu104–Leu124. Na(+) contacts are provided by Gly78 and Thr81.

It belongs to the fluoride channel Fluc/FEX (TC 1.A.43) family.

The protein resides in the cell inner membrane. The enzyme catalyses fluoride(in) = fluoride(out). Na(+) is not transported, but it plays an essential structural role and its presence is essential for fluoride channel function. In terms of biological role, fluoride-specific ion channel. Important for reducing fluoride concentration in the cell, thus reducing its toxicity. The protein is Fluoride-specific ion channel FluC of Vibrio vulnificus (strain CMCP6).